Here is a 188-residue protein sequence, read N- to C-terminus: dCTP deaminase (188 aa).

DCTP-binding positions include 111-116, 135-137, Gln-156, Tyr-170, and Gln-180; these read KSTYAR and TLE. Residue Glu-137 is the Proton donor/acceptor of the active site.

This sequence belongs to the dCTP deaminase family. Homotrimer.

It carries out the reaction dCTP + H2O + H(+) = dUTP + NH4(+). Its pathway is pyrimidine metabolism; dUMP biosynthesis; dUMP from dCTP (dUTP route): step 1/2. Its function is as follows. Catalyzes the deamination of dCTP to dUTP. The chain is dCTP deaminase from Pseudomonas aeruginosa (strain UCBPP-PA14).